The primary structure comprises 360 residues: Heme A synthase (360 aa).

9 helical membrane-spanning segments follow: residues 29-49 (WLFA…ATRL), 111-131 (FLGR…WWTG), 139-159 (LGLL…WIMV), 175-195 (LAAH…LAAG), 210-230 (LTAL…GLVA), 242-262 (PLMD…TPWI), 269-289 (VALV…VAAL), 309-329 (AILG…LLAV), and 330-350 (PLWA…MAAV). H276 contributes to the heme binding site. H337 is a heme binding site.

This sequence belongs to the COX15/CtaA family. Type 2 subfamily. In terms of assembly, interacts with CtaB. Heme b serves as cofactor.

The protein localises to the cell membrane. The enzyme catalyses Fe(II)-heme o + 2 A + H2O = Fe(II)-heme a + 2 AH2. It functions in the pathway porphyrin-containing compound metabolism; heme A biosynthesis; heme A from heme O: step 1/1. In terms of biological role, catalyzes the conversion of heme O to heme A by two successive hydroxylations of the methyl group at C8. The first hydroxylation forms heme I, the second hydroxylation results in an unstable dihydroxymethyl group, which spontaneously dehydrates, resulting in the formyl group of heme A. The sequence is that of Heme A synthase from Methylobacterium nodulans (strain LMG 21967 / CNCM I-2342 / ORS 2060).